A 439-amino-acid polypeptide reads, in one-letter code: uncharacterized protein (439 aa).

An N-terminal signal peptide occupies residues 1–19 (MKKLLLTASIICLASAGLA).

This is an uncharacterized protein from Rickettsia felis (strain ATCC VR-1525 / URRWXCal2) (Rickettsia azadi).